A 363-amino-acid polypeptide reads, in one-letter code: Insulin gene enhancer protein ISL-3 (363 aa).

2 consecutive LIM zinc-binding domains span residues 27–80 and 89–143; these read CVGC…CKRD and CAKC…RADH. The homeobox DNA-binding region spans 191 to 250; that stretch reads TTRVRTVLNEKQLHTLRTCYNANPRPDALMREQLVEMTGLSPRVIRVWFQNKRCKDKKRS. Residues 328-363 form a disordered region; it reads FSESGSLGNSSGSDVTSLSSHLPDTPNSMVPSPVET. Positions 329-340 are enriched in low complexity; the sequence is SESGSLGNSSGS. Residues 341–363 are compositionally biased toward polar residues; that stretch reads DVTSLSSHLPDTPNSMVPSPVET.

It is found in the nucleus. Its function is as follows. Binds to one of the cis-acting domain of the insulin gene enhancer. May be involved in subtype specialization of primary motoneurons. The protein is Insulin gene enhancer protein ISL-3 (isl3) of Oncorhynchus tshawytscha (Chinook salmon).